A 275-amino-acid chain; its full sequence is Urease accessory protein UreD (275 aa).

This sequence belongs to the UreD family. As to quaternary structure, ureD, UreF and UreG form a complex that acts as a GTP-hydrolysis-dependent molecular chaperone, activating the urease apoprotein by helping to assemble the nickel containing metallocenter of UreC. The UreE protein probably delivers the nickel.

It localises to the cytoplasm. Its function is as follows. Required for maturation of urease via the functional incorporation of the urease nickel metallocenter. This is Urease accessory protein UreD from Cereibacter sphaeroides (strain ATCC 17025 / ATH 2.4.3) (Rhodobacter sphaeroides).